The following is a 687-amino-acid chain: MDSITNKRSLFESSHFWILLSLIAFIALPSKALDYGLLESTADEFLDAMGWSSVNLTILWFLPLIGFWLLPSLKLSTETQAKVELGLISFILLFAFISATIYKVSMGYSVIVLIATLTALATFAFAKLKMMQGDKFIIGALLSIILLIFFFIVYPTVAIFISMFYDGETFAPEQVVRILGQGYIVRVISNSLFLSGFVGIVSTVFGLAFALYTTRIAHRTAFIGKIFSILPIVTPPFVVGLGVTLMLGRSGYVTEFLDTYFGFKDHNWLYGFNGIAIAQILAFAPISFMILDGALKSIHPSIEEASYTLRANRYQTFYNIIFPLLRPALANSFLIVFIQSLADFSNPLVLGGSFDVIATQIYFYIAGSQLDYASASTLGSMLLIFSLLIFIVQYMWIGNRSYVTVSGKSYRGDVQDLPSGLKYTIIVMLGFWVVFNFALYGSIFYGSFTVNWGVDYTLTLNNYAMLFGQGLSDGAWPSLINTMIYAGIAAPLTALFGLLIAYIVVRKDFQGKKTLEFLTMLCFAVPGTVAGVSYILAFNDAPMYITGTGIIIIISMVMRDLPIGMRAAIAGLGQLDKSLDEASLSLKGSSLKTIWFIVFPLLKPALLSALVTSFVRAMTTVSAIVFLVTADTRVATAYILNRVEDGEYGVAIAYGSILIVVMMAIILFFDWIVGDTRIPKSQAKKAD.

The next 19 membrane-spanning stretches (helical) occupy residues 10–30 (LFESSHFWILLSLIAFIALPS), 50–70 (GWSSVNLTILWFLPLIGFWLL), 85–105 (LGLISFILLFAFISATIYKVS), 106–126 (MGYSVIVLIATLTALATFAFA), 141–161 (LLSIILLIFFFIVYPTVAIFI), 192–212 (LFLSGFVGIVSTVFGLAFALY), 226–246 (IFSILPIVTPPFVVGLGVTLM), 271–291 (GFNGIAIAQILAFAPISFMIL), 318–338 (YNIIFPLLRPALANSFLIVFI), 347–367 (PLVLGGSFDVIATQIYFYIAG), 378–398 (LGSMLLIFSLLIFIVQYMWIG), 425–445 (IIVMLGFWVVFNFALYGSIFY), 450–472 (VNWGVDYTLTLNNYAMLFGQGLS), 484–504 (IYAGIAAPLTALFGLLIAYIV), 517–537 (FLTMLCFAVPGTVAGVSYILA), 538–558 (FNDAPMYITGTGIIIIISMVM), 594–614 (IWFIVFPLLKPALLSALVTSF), 620–640 (TVSAIVFLVTADTRVATAYIL), and 649–669 (GVAIAYGSILIVVMMAIILFF). The region spanning 188–393 (ISNSLFLSGF…IFSLLIFIVQ (206 aa)) is the ABC transmembrane type-1 1 domain. Residues 479-669 (LINTMIYAGI…VVMMAIILFF (191 aa)) form the ABC transmembrane type-1 2 domain.

Belongs to the binding-protein-dependent transport system permease family. FbpB subfamily. In terms of assembly, the complex is composed of two ATP-binding proteins (FbpC), two transmembrane proteins (FbpB) and a solute-binding protein (FbpA).

It localises to the cell inner membrane. Functionally, part of the ABC transporter complex FbpABC (TC 3.A.1.10.1) involved in Fe(3+) ions import. Probably responsible for the translocation of the substrate across the membrane. In Actinobacillus pleuropneumoniae (Haemophilus pleuropneumoniae), this protein is Ferric transport system permease protein FbpB (fbpB).